Here is a 318-residue protein sequence, read N- to C-terminus: Probable dual-specificity RNA methyltransferase RlmN (318 aa).

Glu-63 serves as the catalytic Proton acceptor. Positions 69-299 (HDYGRTVCVS…VSLRRELGAD (231 aa)) constitute a Radical SAM core domain. A disulfide bond links Cys-76 and Cys-304. [4Fe-4S] cluster-binding residues include Cys-83, Cys-87, and Cys-90. S-adenosyl-L-methionine is bound by residues 130–131 (GE), Ser-162, 185–187 (SLH), and Asn-261. Cys-304 (S-methylcysteine intermediate) is an active-site residue.

This sequence belongs to the radical SAM superfamily. RlmN family. Requires [4Fe-4S] cluster as cofactor.

It localises to the cytoplasm. It carries out the reaction adenosine(2503) in 23S rRNA + 2 reduced [2Fe-2S]-[ferredoxin] + 2 S-adenosyl-L-methionine = 2-methyladenosine(2503) in 23S rRNA + 5'-deoxyadenosine + L-methionine + 2 oxidized [2Fe-2S]-[ferredoxin] + S-adenosyl-L-homocysteine. It catalyses the reaction adenosine(37) in tRNA + 2 reduced [2Fe-2S]-[ferredoxin] + 2 S-adenosyl-L-methionine = 2-methyladenosine(37) in tRNA + 5'-deoxyadenosine + L-methionine + 2 oxidized [2Fe-2S]-[ferredoxin] + S-adenosyl-L-homocysteine. In terms of biological role, specifically methylates position 2 of adenine 2503 in 23S rRNA and position 2 of adenine 37 in tRNAs. The polypeptide is Probable dual-specificity RNA methyltransferase RlmN (Desulforudis audaxviator (strain MP104C)).